Reading from the N-terminus, the 247-residue chain is MSGALKRKRSDEVAWSRRRPVKKPVRRAPPPRAGPSVRRGLPSLQIQTLVAAGDTMITVPSGGICSLIGTYARGSGEGERHTNETLTYKVALDYHFVATAAACKYSSIGIGVCWLVYDAQPTGTAPTVQDIFPHPATLSAFPYTWKVGREVCHRFVVKRRWCFTMETNGRIGSDTPPSNVAWPPCKKDIYFHKFCTGLGVKTEWKNVTDGKDGAIKKGGFYIVIAPGNVEFTCHGQCRLYFKSVGNQ.

The Bipartite nuclear localization signal signature appears at 1 to 28; it reads MSGALKRKRSDEVAWSRRRPVKKPVRRA. The tract at residues 1–39 is disordered; that stretch reads MSGALKRKRSDEVAWSRRRPVKKPVRRAPPPRAGPSVRR. The span at 16 to 26 shows a compositional bias: basic residues; the sequence is SRRRPVKKPVR.

The protein belongs to the geminiviridae capsid protein family. Homomultimer. Interacts with the movement protein. Binds to single-stranded and double-stranded viral DNA.

The protein localises to the virion. It localises to the host nucleus. In terms of biological role, encapsidates the viral genome into characteristic twinned ('geminate') particles. Binds the genomic viral ssDNA and shuttles it into and out of the cell nucleus. Plays a role in protection of the genome from degradation, virus acquisition and transmission by insect vectors, infectivity, and systemic movement. The CP of monopartite geminiviruses is absolutely essential for virus movement. This is Capsid protein from Megathyrsus maximus (PanSV).